The primary structure comprises 162 residues: Glycine cleavage system H protein, mitochondrial (162 aa).

Residues 1–31 constitute a mitochondrion transit peptide; it reads MALRIWASSTANALRLSSATRPHFSPLSRCF. A Lipoyl-binding domain is found at 53-135; it reads VATIGITDHA…YEDGWMIKVK (83 aa). At K94 the chain carries N6-lipoyllysine.

Belongs to the GcvH family. The glycine cleavage system is composed of four proteins: P, T, L and H. Requires (R)-lipoate as cofactor.

Its subcellular location is the mitochondrion. The glycine cleavage system catalyzes the degradation of glycine. The H protein shuttles the methylamine group of glycine from the P protein to the T protein. In Flaveria pringlei, this protein is Glycine cleavage system H protein, mitochondrial (GDCSH).